The following is a 224-amino-acid chain: Virulence transcriptional regulatory protein PhoP (224 aa).

The Response regulatory domain occupies R3–M117. The residue at position 52 (D52) is a 4-aspartylphosphate. The segment at residues S125 to L223 is a DNA-binding region (ompR/PhoB-type).

As to quaternary structure, monomer in the inactive, unphosphorylated state and dimer in the active, phosphorylated state. Phosphorylated by PhoQ.

The protein resides in the cytoplasm. In terms of biological role, member of the two-component regulatory system PhoP/PhoQ which regulates the expression of genes involved in virulence, adaptation to acidic and low Mg(2+) environments and resistance to host defense antimicrobial peptides. Essential for intramacrophage survival of S.typhimurium. In low periplasmic Mg(2+), PhoQ phosphorylates PhoP, resulting in the expression of PhoP-activated genes (PAG) and repression of PhoP-repressed genes (PRG). In high periplasmic Mg(2+), PhoQ dephosphorylates phospho-PhoP, resulting in the repression of PAG and may lead to expression of some PRG. Essential for transcription of spiC inside macrophages by controlling the expression of the two-component regulatory system SsrB/SpiR (SsrA) and Pir at transcriptional and post-transcriptional levels respectively. Promotes expression of the two-component regulatory system PmrA/PmrB via activation of pmrD gene. Is required to attenuate bacterial growth within fibroblast cells and to enhance bacterial resistance to bile in intestinal cells. Negatively regulates prgH, which is required for invasion of epithelial cells. PhoP uses multiple mechanisms to promote transcription and activates promoters for PAG at low (uM range) Mg(2+) concentrations. Involved in acid tolerance. The chain is Virulence transcriptional regulatory protein PhoP (phoP) from Salmonella typhimurium (strain SL1344).